Reading from the N-terminus, the 100-residue chain is DNA-binding protein HU (100 aa).

It belongs to the bacterial histone-like protein family.

In terms of biological role, histone-like DNA-binding protein which is capable of wrapping DNA to stabilize it, and thus to prevent its denaturation under extreme environmental conditions. The polypeptide is DNA-binding protein HU (hup) (Synechocystis sp. (strain ATCC 27184 / PCC 6803 / Kazusa)).